Consider the following 177-residue polypeptide: Large ribosomal subunit protein uL6 (177 aa).

This sequence belongs to the universal ribosomal protein uL6 family. In terms of assembly, part of the 50S ribosomal subunit.

In terms of biological role, this protein binds to the 23S rRNA, and is important in its secondary structure. It is located near the subunit interface in the base of the L7/L12 stalk, and near the tRNA binding site of the peptidyltransferase center. The sequence is that of Large ribosomal subunit protein uL6 from Acinetobacter baylyi (strain ATCC 33305 / BD413 / ADP1).